A 694-amino-acid chain; its full sequence is Ubiquitin-like modifier-activating enzyme ATG7 (694 aa).

Residues 370-375 (GAGTLG) carry the GXGXXG motif motif. The active-site Glycyl thioester intermediate is Cys550. The homodimerization stretch occupies residues 650–689 (ALQEKEYVAELSGLAEVQRRAEEMAAHVDWEEDDDLVDDG).

It belongs to the ATG7 family. In terms of assembly, homodimer. Interacts with ATG8 through a thioester bond between Cys-550 and the C-terminal 'Gly-116' of ATG8 and with ATG12 through a thioester bond between Cys-550 and the C-terminal 'Gly-160' of ATG12. Also interacts with ATG3.

It is found in the cytoplasm. The protein localises to the preautophagosomal structure. Functionally, E1-like activating enzyme involved in the 2 ubiquitin-like systems required for cytoplasm to vacuole transport (Cvt) and autophagy. Activates ATG12 for its conjugation with ATG5 and ATG8 for its conjugation with phosphatidylethanolamine. Both systems are needed for the ATG8 association to Cvt vesicles and autophagosomes membranes. Autophagy is essential for maintenance of amino acid levels and protein synthesis under nitrogen starvation. Required for selective autophagic degradation of the nucleus (nucleophagy) as well as for mitophagy which contributes to regulate mitochondrial quantity and quality by eliminating the mitochondria to a basal level to fulfill cellular energy requirements and preventing excess ROS production. Autophagy is required for proper vegetative growth, asexual/sexual reproduction, and full virulence. Autophagy is particularly involved in the biosynthesis of deoxynivalenol (DON), an important virulence determinant. This chain is Ubiquitin-like modifier-activating enzyme ATG7, found in Gibberella zeae (strain ATCC MYA-4620 / CBS 123657 / FGSC 9075 / NRRL 31084 / PH-1) (Wheat head blight fungus).